The following is a 129-amino-acid chain: Serum amyloid A protein (129 aa).

Residues 1-18 form the signal peptide; that stretch reads MKLFPGLLFCSLVLGVSG. At Gln19 the chain carries Pyrrolidone carboxylic acid. Positions 92-129 are disordered; it reads GDSGHGAEDSKADQAANEWGRSGKDPNHFRPAGLPDKY. Residues 112-129 constitute a propeptide, often cleaved during amyloidogenesis; that stretch reads RSGKDPNHFRPAGLPDKY.

It belongs to the SAA family. In terms of processing, this protein is the precursor of amyloid protein A, which is formed by the removal of residues from the C-terminal end. In terms of tissue distribution, expressed by the liver; secreted in plasma.

The protein localises to the secreted. In terms of biological role, major acute phase reactant. Apolipoprotein of the HDL complex. This is Serum amyloid A protein (SAA1) from Canis lupus familiaris (Dog).